Reading from the N-terminus, the 189-residue chain is Probable nicotinate-nucleotide adenylyltransferase (189 aa).

The protein belongs to the NadD family.

It catalyses the reaction nicotinate beta-D-ribonucleotide + ATP + H(+) = deamido-NAD(+) + diphosphate. It functions in the pathway cofactor biosynthesis; NAD(+) biosynthesis; deamido-NAD(+) from nicotinate D-ribonucleotide: step 1/1. In terms of biological role, catalyzes the reversible adenylation of nicotinate mononucleotide (NaMN) to nicotinic acid adenine dinucleotide (NaAD). This Bacillus licheniformis (strain ATCC 14580 / DSM 13 / JCM 2505 / CCUG 7422 / NBRC 12200 / NCIMB 9375 / NCTC 10341 / NRRL NRS-1264 / Gibson 46) protein is Probable nicotinate-nucleotide adenylyltransferase.